The sequence spans 517 residues: Facilitated trehalose transporter Tret1 (517 aa).

The Cytoplasmic portion of the chain corresponds to 1-56 (MWIEIPECYEVLRNVFSKFRRHSLTAAMVKLLMRADTHVSFTVPAEEPVAKCTFSQ). The chain crosses the membrane as a helical span at residues 57-77 (VLAALSVSLGSMVVGFSSAYT). Residues 78 to 100 (SPALVSMKDRNITSFEVTDQSGS) are Extracellular-facing. A glycan (N-linked (GlcNAc...) asparagine) is linked at N88. The chain crosses the membrane as a helical span at residues 101–121 (WVGGIMPLAGLVGGILGGPLI). Residues 122–135 (EYLGRKNTILATAT) are Cytoplasmic-facing. Residues 136–156 (PFIISWLLIACATHVAMVLVG) form a helical membrane-spanning segment. The Extracellular segment spans residues 157-158 (RA). Residues 159 to 179 (LSGFSVGVASLSLPVYLGETV) form a helical membrane-spanning segment. The Cytoplasmic portion of the chain corresponds to 180–184 (QPEVR). A helical membrane pass occupies residues 185-205 (GTLGLLPTAFGNIGILLCFVA). The Extracellular segment spans residues 206–212 (GNYMDWS). A helical membrane pass occupies residues 213 to 233 (ELAFLGATLPVPFLILMFLIP). Residues 234–296 (ETPRWYVSRG…DLLKKTNLKP (63 aa)) are Cytoplasmic-facing. The helical transmembrane segment at 297 to 317 (LLISLGLMFFQQLSGINAVIF) threads the bilayer. Topologically, residues 318-333 (YTVQIFQDAGSTIDEN) are extracellular. The helical transmembrane segment at 334–354 (LCTIIVGVVNFIATFIATLLI) threads the bilayer. Residues 355–360 (DRLGRK) are Cytoplasmic-facing. The chain crosses the membrane as a helical span at residues 361–381 (MLLYISDIAMIITLMTLGGFF). Residues 382 to 392 (YVKNNGGDVSH) are Extracellular-facing. Residues 393 to 413 (IGWLPLASFVIFVLGFSLGFG) form a helical membrane-spanning segment. Topologically, residues 414–437 (PIPWLMMGEILPGKIRGSAASVAT) are cytoplasmic. Residues 438 to 458 (AFNWSCTFVVTKTFADIIASI) traverse the membrane as a helical segment. At 459–461 (GTH) the chain is on the extracellular side. Residues 462–482 (GAFWMFGSVCVVGLVFVIMYV) form a helical membrane-spanning segment. Residues 483–517 (PETQGKSLEDIERKMCGRVRRMSSVANIKPLSFNM) lie on the Cytoplasmic side of the membrane.

The protein belongs to the major facilitator superfamily. Sugar transporter (TC 2.A.1.1) family. Trehalose transporter subfamily.

The protein localises to the cell membrane. Its function is as follows. High-capacity facilitative transporter for trehalose. Does not transport maltose, sucrose or lactose. Mediates the bidirectional transfer of trehalose. Responsible for the transport of trehalose synthesized in the fat body and the incorporation of trehalose into other tissues that require a carbon source, thereby regulating trehalose levels in the hemolymph. The chain is Facilitated trehalose transporter Tret1 from Culex quinquefasciatus (Southern house mosquito).